The sequence spans 1024 residues: MTMITDSLAVVLQRRDWENPGVTQLNRLAAHPPFASWRNSEEARTNRPSQQLRSLNGEWQFVWFPAPEAVPESWLECDLPVADTVVVPSNWQMHGYDAPIYTNVTYPITVNPPFVPTENPTGYYSLTFNVDESWLQEGQTRIIFDGVNSAFHLWCNGRWVGYGQDSRLPSEFDLSAFLRAGENRLAVMVLRWSDGSYLEDQDMWRMSGIFRDVSLLHKPTTQIRDFHVATRFNDDFSRAVLEAEVQMYGELRDELRVTVSLWQGETQVASGTAPFGGEIIHERGGYADRVTLGLNVENPKLWSAEIPNIYRAVVELHTADGTLIEAEACDVGFREVRIENGLLLLNGKPLLIRGVNRHEHHPLHGQVMDEQTMVQDILLMKQNNFNAVRCSHYPNHPLWYTLCDRYGLYVVDEANIETHGMVPMNRLTDDPRWLPAMSERVTRMVQRDRNHPSVIIWSLGNESGHGANHDALYRWIKSVDPSRPVQYEGGGADTSATDIICPMYARVDEDQLFPAVPKWSIKKWLSLPGETRPLILCEYAHAMGNSLGGFAKYWQAFRQYPRLQGGFVWDWVDQSLIKYDENGNPWSAYGGDFGDTPNDRQFCMNGLVFADRTPHPALTEAKHQQQFFQFRLSGRTIEVTSEYLFRQSDNELLHWTVALDGKPLASSEVPMNVAPQGKQVIELPELPRLESTGQLWLTVHVVQPNATAWSEAGHISAWQQWRLAANLSVTLPSAPHAIPQLTTSETDFCIELDNKRWQFNRQSGFLSQMWIGDEKQLLTPLRDQFTRAPLDNDIGVSEATRIDPNAWVERWKAAGHYQAEAALLQCTADTLADAVLITTAHTWQHQGKTLFISRKTYRIDGSGQMAITVDVEVASDTPHPARIGLTCQLAQVAERVNWLGLGPQENYPDRLTAACFDRWDLPLSDMYTPYVFPSENGLRCGTRELNYGPHQWRGDFQFNISRYSQQQLMETSHRHLLHAEEGTWLNIDGFHMGIGGDDSWSPSVSAEFQLSAGRYHYQLVWCQK.

Positions 103 and 202 each coordinate substrate. Position 202 (Asp202) interacts with Na(+). Residues Glu417, His419, and Glu462 each coordinate Mg(2+). Residues Glu462 and 538-541 (EYAH) each bind substrate. Residue Glu462 is the Proton donor of the active site. Residue Glu538 is the Nucleophile of the active site. Mg(2+) is bound at residue Asn598. 2 residues coordinate Na(+): Phe602 and Asn605. The substrate site is built by Asn605 and Trp1000.

The protein belongs to the glycosyl hydrolase 2 family. Homotetramer. Requires Mg(2+) as cofactor. The cofactor is Na(+).

The catalysed reaction is Hydrolysis of terminal non-reducing beta-D-galactose residues in beta-D-galactosides.. This Shigella dysenteriae serotype 1 (strain Sd197) protein is Beta-galactosidase.